The chain runs to 343 residues: Methionine import ATP-binding protein MetN 1 (343 aa).

In terms of domain architecture, ABC transporter spans 2–241 (IKLSNITKVF…PKTPLAQKFI (240 aa)). 38–45 (GASGAGKS) contributes to the ATP binding site.

This sequence belongs to the ABC transporter superfamily. Methionine importer (TC 3.A.1.24) family. As to quaternary structure, the complex is composed of two ATP-binding proteins (MetN), two transmembrane proteins (MetI) and a solute-binding protein (MetQ).

Its subcellular location is the cell inner membrane. The catalysed reaction is L-methionine(out) + ATP + H2O = L-methionine(in) + ADP + phosphate + H(+). It carries out the reaction D-methionine(out) + ATP + H2O = D-methionine(in) + ADP + phosphate + H(+). Part of the ABC transporter complex MetNIQ involved in methionine import. Responsible for energy coupling to the transport system. The polypeptide is Methionine import ATP-binding protein MetN 1 (Salmonella choleraesuis (strain SC-B67)).